We begin with the raw amino-acid sequence, 418 residues long: MGDKGTRVFKKASPNGKLTVYLGKRDFVDHIDLVDPVDGVVLVDPEYLKERRVYVTLTCAFRYGREDLDVLGLTFRKDLFVANVQSFPPAPEDKKPLTRLQERLIKKLGEHAYPFTFEIPPNLPCSVTLQPGPEDTGKACGVDYEVKAFCAENLEEKIHKRNSVRLVIRKVQYAPERPGPQPTAETTRQFLMSDKPLHLEASLDKEIYYHGEPISVNVHVTNNTNKTVKKIKISVRQYADICLFNTAQYKCPVAMEEADDTVAPSSTFCKVYTLTPFLANNREKRGLALDGKLKHEDTNLASSTLLREGANREILGIIVSYKVKVKLVVSRGGLLGDLASSDVAVELPFTLMHPKPKEEPPHREVPENETPVDTNLIELDTNDDDIVFEDFARQRLKGMKDDKEEEEDGTGSPQLNNR.

The segment at 1 to 163 is interaction with SRC; that stretch reads MGDKGTRVFK…LEEKIHKRNS (163 aa). Residues 45-86 form an interaction with CHRM2 region; sequence PEYLKERRVYVTLTCAFRYGREDLDVLGLTFRKDLFVANVQS. Tyr-47 is subject to Phosphotyrosine. Residues Lys-250, Met-255, Lys-324, and Lys-326 each coordinate 1D-myo-inositol hexakisphosphate. Residues 318–418 form an interaction with TRAF6 region; it reads IVSYKVKVKL…GTGSPQLNNR (101 aa). Residues 353 to 375 are disordered; the sequence is HPKPKEEPPHREVPENETPVDTN. A compositionally biased stretch (basic and acidic residues) spans 355–366; the sequence is KPKEEPPHREVP. Positions 385–395 match the [DE]-X(1,2)-F-X-X-[FL]-X-X-X-R motif motif; that stretch reads DIVFEDFARQR. A disordered region spans residues 397 to 418; the sequence is KGMKDDKEEEEDGTGSPQLNNR. The residue at position 412 (Ser-412) is a Phosphoserine; by GRK5.

This sequence belongs to the arrestin family. In terms of assembly, monomer. Homodimer. Homooligomer; the self-association is mediated by InsP6-binding. Heterooligomer with ARRB2; the association is mediated by InsP6-binding. Interacts with GPR143. Interacts with ADRB2 (phosphorylated). Interacts with CHRM2 (phosphorylated). Interacts with LHCGR. Interacts with CYTH2 and CASR. Interacts with AP2B1 (dephosphorylated at 'Tyr-737'); phosphorylation of AP2B1 at 'Tyr-737' disrupts the interaction. Interacts (dephosphorylated at Ser-412) with CLTC. Interacts with CCR2 and GRK2. Interacts with CRR5. Interacts with PTAFR (phosphorylated on serine residues). Interacts with CLTC and MAP2K3. Interacts with CREB1. Interacts with TRAF6. Interacts with IGF1R and MDM2. Interacts with C5AR1. Interacts with PDE4D. Interacts with SRC (via the SH3 domain and the protein kinase domain); the interaction is independent of the phosphorylation state of SRC C-terminus. Interacts with TACR1. Interacts with RAF1. Interacts with CHUK, IKBKB and MAP3K14. Interacts with DVL1; the interaction is enhanced by phosphorylation of DVL1. Interacts with DVL2; the interaction is enhanced by phosphorylation of DVL2. Interacts with IGF1R. Associates with MAP kinase p38. Part of a MAPK signaling complex consisting of TACR1, ARRB1, SRC, MAPK1 (activated) and MAPK3 (activated). Part of a MAPK signaling complex consisting of F2RL1, ARRB1, RAF1, MAPK1 (activated) and MAPK3 (activated). Interacts with MAP2K4/MKK4. Interacts with HCK and CXCR1 (phosphorylated). Interacts with ACKR3 and ACKR4. Interacts with ARRDC1; the interaction is direct. Interacts with GPR61, GPR62 and GPR135. Constitutively phosphorylated at Ser-412 in the cytoplasm. At the plasma membrane, is rapidly dephosphorylated, a process that is required for clathrin binding and ADRB2 endocytosis but not for ADRB2 binding and desensitization. Once internalized, is rephosphorylated. Post-translationally, the ubiquitination status appears to regulate the formation and trafficking of beta-arrestin-GPCR complexes and signaling. Ubiquitination appears to occur GPCR-specific. Ubiquitinated by MDM2; the ubiquitination is required for rapid internalization of ADRB2. Deubiquitinated by USP33; the deubiquitination leads to a dissociation of the beta-arrestin-GPCR complex. Stimulation of a class A GPCR, such as ADRB2, induces transient ubiquitination and subsequently promotes association with USP33.

It is found in the cytoplasm. The protein localises to the nucleus. Its subcellular location is the cell membrane. The protein resides in the membrane. It localises to the clathrin-coated pit. It is found in the cell projection. The protein localises to the pseudopodium. Its subcellular location is the cytoplasmic vesicle. Functionally, functions in regulating agonist-mediated G-protein coupled receptor (GPCR) signaling by mediating both receptor desensitization and resensitization processes. During homologous desensitization, beta-arrestins bind to the GPRK-phosphorylated receptor and sterically preclude its coupling to the cognate G-protein; the binding appears to require additional receptor determinants exposed only in the active receptor conformation. The beta-arrestins target many receptors for internalization by acting as endocytic adapters (CLASPs, clathrin-associated sorting proteins) and recruiting the GPRCs to the adapter protein 2 complex 2 (AP-2) in clathrin-coated pits (CCPs). However, the extent of beta-arrestin involvement appears to vary significantly depending on the receptor, agonist and cell type. Internalized arrestin-receptor complexes traffic to intracellular endosomes, where they remain uncoupled from G-proteins. Two different modes of arrestin-mediated internalization occur. Class A receptors, like ADRB2, OPRM1, ENDRA, D1AR and ADRA1B dissociate from beta-arrestin at or near the plasma membrane and undergo rapid recycling. Class B receptors, like AVPR2, AGTR1, NTSR1, TRHR and TACR1 internalize as a complex with arrestin and traffic with it to endosomal vesicles, presumably as desensitized receptors, for extended periods of time. Receptor resensitization then requires that receptor-bound arrestin is removed so that the receptor can be dephosphorylated and returned to the plasma membrane. Involved in internalization of P2RY4 and UTP-stimulated internalization of P2RY2. Involved in phosphorylation-dependent internalization of OPRD1 ands subsequent recycling. Involved in the degradation of cAMP by recruiting cAMP phosphodiesterases to ligand-activated receptors. Beta-arrestins function as multivalent adapter proteins that can switch the GPCR from a G-protein signaling mode that transmits short-lived signals from the plasma membrane via small molecule second messengers and ion channels to a beta-arrestin signaling mode that transmits a distinct set of signals that are initiated as the receptor internalizes and transits the intracellular compartment. Acts as a signaling scaffold for MAPK pathways such as MAPK1/3 (ERK1/2). ERK1/2 activated by the beta-arrestin scaffold is largely excluded from the nucleus and confined to cytoplasmic locations such as endocytic vesicles, also called beta-arrestin signalosomes. Recruits c-Src/SRC to ADRB2 resulting in ERK activation. GPCRs for which the beta-arrestin-mediated signaling relies on both ARRB1 and ARRB2 (codependent regulation) include ADRB2, F2RL1 and PTH1R. For some GPCRs the beta-arrestin-mediated signaling relies on either ARRB1 or ARRB2 and is inhibited by the other respective beta-arrestin form (reciprocal regulation). Inhibits ERK1/2 signaling in AGTR1- and AVPR2-mediated activation (reciprocal regulation). Is required for SP-stimulated endocytosis of NK1R and recruits c-Src/SRC to internalized NK1R resulting in ERK1/2 activation, which is required for the antiapoptotic effects of SP. Is involved in proteinase-activated F2RL1-mediated ERK activity. Acts as a signaling scaffold for the AKT1 pathway. Is involved in alpha-thrombin-stimulated AKT1 signaling. Is involved in IGF1-stimulated AKT1 signaling leading to increased protection from apoptosis. Involved in activation of the p38 MAPK signaling pathway and in actin bundle formation. Involved in F2RL1-mediated cytoskeletal rearrangement and chemotaxis. Involved in AGTR1-mediated stress fiber formation by acting together with GNAQ to activate RHOA. Appears to function as signaling scaffold involved in regulation of MIP-1-beta-stimulated CCR5-dependent chemotaxis. Involved in attenuation of NF-kappa-B-dependent transcription in response to GPCR or cytokine stimulation by interacting with and stabilizing CHUK. May serve as nuclear messenger for GPCRs. Involved in OPRD1-stimulated transcriptional regulation by translocating to CDKN1B and FOS promoter regions and recruiting EP300 resulting in acetylation of histone H4. Involved in regulation of LEF1 transcriptional activity via interaction with DVL1 and/or DVL2 Also involved in regulation of receptors other than GPCRs. Involved in Toll-like receptor and IL-1 receptor signaling through the interaction with TRAF6 which prevents TRAF6 autoubiquitination and oligomerization required for activation of NF-kappa-B and JUN. Binds phosphoinositides. Binds inositolhexakisphosphate (InsP6). Involved in IL8-mediated granule release in neutrophils. Required for atypical chemokine receptor ACKR2-induced RAC1-LIMK1-PAK1-dependent phosphorylation of cofilin (CFL1) and for the up-regulation of ACKR2 from endosomal compartment to cell membrane, increasing its efficiency in chemokine uptake and degradation. Involved in the internalization of the atypical chemokine receptor ACKR3. Negatively regulates the NOTCH signaling pathway by mediating the ubiquitination and degradation of NOTCH1 by ITCH. Participates in the recruitment of the ubiquitin-protein ligase to the receptor. The protein is Beta-arrestin-1 (ARRB1) of Homo sapiens (Human).